The sequence spans 1150 residues: C5a peptidase (1150 aa).

Positions 1 to 31 (MRKKQKLPFDKLAIALMSTSILLNAQSDIKA) are cleaved as a signal peptide. The disordered stretch occupies residues 33 to 73 (TVTEDTPAAEQAVETPQPTAVSEEVPSSKETKTPQTPDNAE). One can recognise a Peptidase S8 domain in the interval 99–581 (KATIRDLNDP…AGAVDAKKAS (483 aa)). Active-site charge relay system residues include aspartate 130, histidine 193, and serine 512. Composition is skewed to basic and acidic residues over residues 1029–1054 (EGHSNKPEQDGSDQAPDKKPEAKPEQ) and 1061–1073 (PDKKPETKPEKDS). The segment at 1029–1116 (EGHSNKPEQD…RDQLPTTNDK (88 aa)) is disordered. 3 consecutive repeat copies span residues 1034 to 1050 (KPEQDGSDQAPDKKPEA), 1051 to 1067 (KPEQDGSGQTPDKKPET), and 1068 to 1084 (KPEKDSSGQTPGKTPQK). The interval 1034–1084 (KPEQDGSDQAPDKKPEAKPEQDGSGQTPDKKPETKPEKDSSGQTPGKTPQK) is 3 X 17 AA tandem repeats. The span at 1075–1089 (GQTPGKTPQKGQPSR) shows a compositional bias: polar residues. An LPXTG sorting signal motif is present at residues 1110-1114 (LPTTN). Position 1113 is a pentaglycyl murein peptidoglycan amidated threonine (threonine 1113). A propeptide spans 1114–1150 (NDKDTNRLHLLKLVMTTFFFGLVAHIFKTKRQKETKK) (removed by sortase).

This sequence belongs to the peptidase S8 family. In terms of processing, cleaved by SpeB protease; leading to its degradation. Degradation by SpeB is probably strictly regulated to preserve integrity of C5a peptidase.

It is found in the secreted. It localises to the cell wall. It catalyses the reaction The primary cleavage site is at 67-His-|-Lys-68 in human C5a with a minor secondary cleavage site at 58-Ala-|-Ser-59.. Its function is as follows. This virulence factor of S.pyogenes specifically cleaves the human serum chemotaxin C5a at '68-Lys-|-Asp-69' bond near its C-terminus, destroying its ability to serve as a chemoattractant. The polypeptide is C5a peptidase (scpA) (Streptococcus pyogenes serotype M18 (strain MGAS8232)).